Here is a 500-residue protein sequence, read N- to C-terminus: Na(+)/H(+) antiporter NhaB (500 aa).

A run of 12 helical transmembrane segments spans residues 28–50 (FLLLNPLLLWLAGPVTSAWVLVG), 68–88 (GGLLVLEALLLGLATPEALYA), 98–118 (LLLMFMVAGIYFMKDLLLLLF), 121–141 (LLLGVRSKTLLSLLFCLLAAL), 145–165 (FLDALTVTAVVISVAVAFFAV), 205–225 (LLMHAAVGTALGGVCTLVGEP), 244–264 (QVAPVSMPVLAAGLLTCVLLE), 311–331 (VLIVGLALHVAEVGLIGLLVI), 350–370 (FQEALPFTALLVVFFAVVAVI), 394–414 (MLFIANGLLSAISDNVFVATI), 449–469 (VATPNGQAAFLFLLTSSIAPL), and 477–497 (MVWMALPYTLVMGGLGWWAVS).

Belongs to the NhaB Na(+)/H(+) (TC 2.A.34) antiporter family.

The protein resides in the cell inner membrane. It carries out the reaction 2 Na(+)(in) + 3 H(+)(out) = 2 Na(+)(out) + 3 H(+)(in). Functionally, na(+)/H(+) antiporter that extrudes sodium in exchange for external protons. The polypeptide is Na(+)/H(+) antiporter NhaB (Pseudomonas aeruginosa (strain LESB58)).